Reading from the N-terminus, the 362-residue chain is GTP cyclohydrolase FolE2 (362 aa).

The protein belongs to the GTP cyclohydrolase IV family.

The catalysed reaction is GTP + H2O = 7,8-dihydroneopterin 3'-triphosphate + formate + H(+). Its pathway is cofactor biosynthesis; 7,8-dihydroneopterin triphosphate biosynthesis; 7,8-dihydroneopterin triphosphate from GTP: step 1/1. In terms of biological role, converts GTP to 7,8-dihydroneopterin triphosphate. The chain is GTP cyclohydrolase FolE2 from Jannaschia sp. (strain CCS1).